The chain runs to 387 residues: Protein-glutamate methylesterase/protein-glutamine glutaminase 2 (387 aa).

Positions 4 to 121 (KVLVVDDSGF…SRNPQKVKQL (118 aa)) constitute a Response regulatory domain. Position 55 is a 4-aspartylphosphate (aspartate 55). Positions 148 to 183 (AAPAAPTSSSRAPAPTTAPARAVPTRTAAPATAPAA) are enriched in low complexity. Residues 148–199 (AAPAAPTSSSRAPAPTTAPARAVPTRTAAPATAPAAHAHHAPAHPTTSGTPK) form a disordered region. The 193-residue stretch at 192–384 (PTTSGTPKRK…LDDIGRHLVE (193 aa)) folds into the CheB-type methylesterase domain. Active-site residues include serine 211, histidine 238, and aspartate 331.

It belongs to the CheB family. Post-translationally, phosphorylated by CheA. Phosphorylation of the N-terminal regulatory domain activates the methylesterase activity.

It is found in the cytoplasm. The enzyme catalyses [protein]-L-glutamate 5-O-methyl ester + H2O = L-glutamyl-[protein] + methanol + H(+). The catalysed reaction is L-glutaminyl-[protein] + H2O = L-glutamyl-[protein] + NH4(+). In terms of biological role, involved in chemotaxis. Part of a chemotaxis signal transduction system that modulates chemotaxis in response to various stimuli. Catalyzes the demethylation of specific methylglutamate residues introduced into the chemoreceptors (methyl-accepting chemotaxis proteins or MCP) by CheR. Also mediates the irreversible deamidation of specific glutamine residues to glutamic acid. The chain is Protein-glutamate methylesterase/protein-glutamine glutaminase 2 from Pseudomonas savastanoi pv. phaseolicola (strain 1448A / Race 6) (Pseudomonas syringae pv. phaseolicola (strain 1448A / Race 6)).